The primary structure comprises 639 residues: UvrABC system protein C (639 aa).

Positions 1 to 16 (MTDLPVDEPDRDDGAD) are enriched in acidic residues. The interval 1-28 (MTDLPVDEPDRDDGADQPDAGADPATPR) is disordered. Over residues 17–27 (QPDAGADPATP) the composition is skewed to low complexity. The GIY-YIG domain occupies 42–120 (SSPGVYRMID…IKKLKPRYNI (79 aa)). The UVR domain maps to 230–265 (KALQHDLAKRMDEAAQALDYEQAAIFRDRIKALTNV).

It belongs to the UvrC family. As to quaternary structure, interacts with UvrB in an incision complex.

It is found in the cytoplasm. In terms of biological role, the UvrABC repair system catalyzes the recognition and processing of DNA lesions. UvrC both incises the 5' and 3' sides of the lesion. The N-terminal half is responsible for the 3' incision and the C-terminal half is responsible for the 5' incision. The polypeptide is UvrABC system protein C (Rhodospirillum rubrum (strain ATCC 11170 / ATH 1.1.1 / DSM 467 / LMG 4362 / NCIMB 8255 / S1)).